Consider the following 357-residue polypeptide: uncharacterized protein (357 aa).

3 consecutive transmembrane segments (helical) span residues 21 to 41, 86 to 106, and 135 to 155; these read FIKIIEFWFYLIQILTVLFSW, FFCLFTDTLYFMMLIITCTLF, and GGFVEFGSFTVLLLLKWPVIF. 2 disordered regions span residues 184–229 and 283–357; these read DKNK…AMSD and KAGS…NKRN. Residues 195-223 are compositionally biased toward low complexity; that stretch reads TTNTTNFSGNGSSSSTTNATSSSSSQANN. Basic and acidic residues-rich tracts occupy residues 305–314 and 322–337; these read KIEEYDNQKQ and KETNKQQTQKDDEKET. Residues 305–337 adopt a coiled-coil conformation; sequence KIEEYDNQKQEEEENEEKETNKQQTQKDDEKET. The segment covering 346–357 has biased composition (basic residues); the sequence is KKSKKGKKNKRN.

The protein localises to the membrane. This is an uncharacterized protein from Dictyostelium discoideum (Social amoeba).